Here is a 372-residue protein sequence, read N- to C-terminus: Beta-1,4-galactosyltransferase 2 (372 aa).

Topologically, residues methionine 1–alanine 15 are cytoplasmic. A helical; Signal-anchor for type II membrane protein transmembrane segment spans residues valine 16–alanine 36. The Lumenal segment spans residues glutamine 37–glycine 372. Residues proline 56 to cysteine 97 form a disordered region. N-linked (GlcNAc...) asparagine glycans are attached at residues asparagine 66 and asparagine 71. Residues asparagine 66–glycine 78 show a composition bias toward polar residues. A disulfide bond links cysteine 97 and cysteine 139. Residues proline 150 to arginine 154, phenylalanine 189 to arginine 191, valine 217 to aspartate 218, and tryptophan 278 each bind UDP-alpha-D-galactose. A disulfide bond links cysteine 211 and cysteine 230. Aspartate 218 is a Mn(2+) binding site. Glycine 280 to aspartate 283 is a binding site for N-acetyl-D-glucosamine. Residue histidine 311 participates in Mn(2+) binding. Histidine 311–arginine 313 is a UDP-alpha-D-galactose binding site. Arginine 323 contacts N-acetyl-D-glucosamine. N-linked (GlcNAc...) asparagine glycosylation is present at asparagine 357.

Belongs to the glycosyltransferase 7 family. Mn(2+) serves as cofactor. Weakly expressed in various tissues. Highest expression in prostate, testis, ovary, intestine, muscle, and in fetal brain.

Its subcellular location is the golgi apparatus. It localises to the golgi stack membrane. The catalysed reaction is D-glucose + UDP-alpha-D-galactose = lactose + UDP + H(+). The enzyme catalyses an N-acetyl-beta-D-glucosaminyl derivative + UDP-alpha-D-galactose = a beta-D-galactosyl-(1-&gt;4)-N-acetyl-beta-D-glucosaminyl derivative + UDP + H(+). It carries out the reaction N-acetyl-D-glucosamine + UDP-alpha-D-galactose = beta-D-galactosyl-(1-&gt;4)-N-acetyl-D-glucosamine + UDP + H(+). Its pathway is protein modification; protein glycosylation. Its function is as follows. Responsible for the synthesis of complex-type N-linked oligosaccharides in many glycoproteins as well as the carbohydrate moieties of glycolipids. Can produce lactose. This is Beta-1,4-galactosyltransferase 2 from Homo sapiens (Human).